A 333-amino-acid polypeptide reads, in one-letter code: Anthranilate phosphoribosyltransferase (333 aa).

5-phospho-alpha-D-ribose 1-diphosphate contacts are provided by residues glycine 81, 84-85 (GD), threonine 89, 91-94 (NIST), 109-117 (KHGNRSVSS), and serine 121. Residue glycine 81 coordinates anthranilate. Serine 93 contacts Mg(2+). Asparagine 112 provides a ligand contact to anthranilate. Arginine 167 is a binding site for anthranilate. Mg(2+) contacts are provided by aspartate 225 and glutamate 226.

This sequence belongs to the anthranilate phosphoribosyltransferase family. In terms of assembly, homodimer. Mg(2+) is required as a cofactor.

The enzyme catalyses N-(5-phospho-beta-D-ribosyl)anthranilate + diphosphate = 5-phospho-alpha-D-ribose 1-diphosphate + anthranilate. It functions in the pathway amino-acid biosynthesis; L-tryptophan biosynthesis; L-tryptophan from chorismate: step 2/5. Catalyzes the transfer of the phosphoribosyl group of 5-phosphorylribose-1-pyrophosphate (PRPP) to anthranilate to yield N-(5'-phosphoribosyl)-anthranilate (PRA). The polypeptide is Anthranilate phosphoribosyltransferase (Glaesserella parasuis serovar 5 (strain SH0165) (Haemophilus parasuis)).